The primary structure comprises 418 residues: 3-isopropylmalate dehydratase large subunit 1 (418 aa).

Residues Cys298, Cys358, and Cys361 each contribute to the [4Fe-4S] cluster site.

It belongs to the aconitase/IPM isomerase family. LeuC type 2 subfamily. Heterodimer of LeuC and LeuD. The cofactor is [4Fe-4S] cluster.

It catalyses the reaction (2R,3S)-3-isopropylmalate = (2S)-2-isopropylmalate. The protein operates within amino-acid biosynthesis; L-leucine biosynthesis; L-leucine from 3-methyl-2-oxobutanoate: step 2/4. Catalyzes the isomerization between 2-isopropylmalate and 3-isopropylmalate, via the formation of 2-isopropylmaleate. In Methanopyrus kandleri (strain AV19 / DSM 6324 / JCM 9639 / NBRC 100938), this protein is 3-isopropylmalate dehydratase large subunit 1.